The sequence spans 422 residues: Enolase (422 aa).

Gln162 lines the (2R)-2-phosphoglycerate pocket. Residue Glu204 is the Proton donor of the active site. Mg(2+) is bound by residues Asp241, Glu284, and Asp311. 4 residues coordinate (2R)-2-phosphoglycerate: Lys336, Arg365, Ser366, and Lys387. Lys336 functions as the Proton acceptor in the catalytic mechanism.

It belongs to the enolase family. The cofactor is Mg(2+).

Its subcellular location is the cytoplasm. The protein localises to the secreted. It is found in the cell surface. It catalyses the reaction (2R)-2-phosphoglycerate = phosphoenolpyruvate + H2O. It participates in carbohydrate degradation; glycolysis; pyruvate from D-glyceraldehyde 3-phosphate: step 4/5. In terms of biological role, catalyzes the reversible conversion of 2-phosphoglycerate (2-PG) into phosphoenolpyruvate (PEP). It is essential for the degradation of carbohydrates via glycolysis. The polypeptide is Enolase (Bartonella quintana (strain Toulouse) (Rochalimaea quintana)).